A 559-amino-acid polypeptide reads, in one-letter code: Endoglin (559 aa).

The first 20 residues, 1 to 20, serve as a signal peptide directing secretion; it reads MKSICCVLVLCLLLCRRSTA. Residues 21-473 lie on the Extracellular side of the membrane; sequence SESICELKDV…SCFEFGLSAV (453 aa). Disulfide bonds link cysteine 25-cysteine 201 and cysteine 47-cysteine 174. N-linked (GlcNAc...) asparagine glycans are attached at residues asparagine 55, asparagine 79, asparagine 109, asparagine 133, asparagine 170, asparagine 302, and asparagine 352. An intrachain disulfide couples cysteine 381 to cysteine 427. Residues 474–494 traverse the membrane as a helical segment; that stretch reads LGIAFGGFLIGVLLTGALWFI. The Cytoplasmic segment spans residues 495–559; sequence KIRTGHPVAL…TQSTPTSSMA (65 aa). Residues 528 to 559 are disordered; sequence RQPVPTHPSPSENSSANASIGSTQSTPTSSMA. Positions 536–546 are enriched in low complexity; that stretch reads SPSENSSANAS. Over residues 547 to 559 the composition is skewed to polar residues; the sequence is IGSTQSTPTSSMA.

As to quaternary structure, homodimer; disulfide-linked.

It localises to the cell membrane. Vascular endothelium glycoprotein that plays an important role in the regulation of angiogenesis. Required for normal structure and integrity of adult vasculature. Important for endothelial cell shape changes in response to blood flow, which drive vascular remodeling and establishment of normal vascular morphology during angiogenesis. This Danio rerio (Zebrafish) protein is Endoglin.